A 90-amino-acid polypeptide reads, in one-letter code: MMKTTIMFMLVVVISLTYSSEEQEVARTYCGAHLANTLADLCFGVEKRSGAQYAPYFWTRQYLGSRGKRGVVDECCFRPCTLDVLLSYCG.

Positions 1–20 (MMKTTIMFMLVVVISLTYSS) are cleaved as a signal peptide. 3 disulfide bridges follow: C30-C76, C42-C89, and C75-C80. The propeptide at 49–67 (SGAQYAPYFWTRQYLGSRG) is c peptide like.

The protein belongs to the insulin family. In terms of assembly, heterodimer of a B chain and an A chain linked by two disulfide bonds.

The protein resides in the secreted. In terms of biological role, brain peptide responsible for activation of prothoracic glands to produce ecdysone in insects. The chain is Bombyxin B-3 (BBXB3) from Bombyx mori (Silk moth).